The sequence spans 141 residues: CYIQNCPRGGKRSYPDTEVRQCIPCGPGNRGNCFGPNICCGEDLGCYIGTPETLRCVEENYLPSPCEAGGKPCGAGGRCAAPGVCCNDQSCTMDSSCLDEDSERQRVSPDQNMTQMNGSASDLLLRLMHMANRQQQQTKHY.

A disulfide bridge connects residues cysteine 1 and cysteine 6. Glycine 9 carries the glycine amide modification. 7 disulfide bridges follow: cysteine 22/cysteine 66, cysteine 25/cysteine 39, cysteine 33/cysteine 56, cysteine 40/cysteine 46, cysteine 73/cysteine 85, cysteine 79/cysteine 97, and cysteine 86/cysteine 91. An N-linked (GlcNAc...) asparagine glycan is attached at asparagine 117.

It belongs to the vasopressin/oxytocin family. Seven disulfide bonds are present in neurophysin.

Its subcellular location is the secreted. Vasotocin is an antidiuretic hormone. This chain is Vasotocin-neurophysin VT, found in Pelophylax lessonae (Pool frog).